A 669-amino-acid polypeptide reads, in one-letter code: Leucine zipper putative tumor suppressor 2 (669 aa).

Residues 1 to 25 (MAIVQTLPVPLEPAPEAATAPQAPV) are compositionally biased toward low complexity. Disordered stretches follow at residues 1 to 56 (MAIV…PTFF), 92 to 131 (NEDF…IPVS), 150 to 201 (PVLP…AADK), and 215 to 323 (GTLS…SDEA). The segment at 1 to 332 (MAIVQTLPVP…ALLHCVLEGK (332 aa)) is required for centrosomal localization. Over residues 172–181 (LSGSQGSLTQ) the composition is skewed to polar residues. Low complexity predominate over residues 187-199 (ASSSSSSSSSSAA). Residues 215–233 (GTLSDSGRNSLSSLPTYST) show a composition bias toward polar residues. Low complexity-rich tracts occupy residues 241–251 (SSPGGHLPSHG) and 267–283 (GPSH…KSTG). The residue at position 249 (Ser-249) is a Phosphoserine. Positions 284–295 (SLGGRVAGGLLG) are enriched in gly residues. Ser-296 carries the post-translational modification Phosphoserine. Residues 298 to 308 (TRASPDSSSCG) are compositionally biased toward polar residues. A compositionally biased stretch (pro residues) spans 311–320 (SPPPPPPPPS). Residues 328-649 (VLEGKLRDRE…LELEARELAD (322 aa)) adopt a coiled-coil conformation. A sufficient for interaction with CTNNB1 region spans residues 447–669 (SGEISLLKQQ…CLEEITATEI (223 aa)). The interval 450-669 (ISLLKQQLKE…CLEEITATEI (220 aa)) is sufficient for interaction with KATNB1 and for inhibition of katanin-mediated microtubule severing. At Ser-570 the chain carries Phosphoserine. Residues 631–640 (LEQELQQLSL) carry the Nuclear export signal motif.

It belongs to the LZTS2 family. Interacts with KATNB1. Also interacts with CTNNB1, gamma-tubulin and KIF23. In terms of tissue distribution, highly expressed in prostate and testis, and at slightly lower levels in spleen, thymus, uterus, small intestine and colon.

The protein resides in the cytoplasm. The protein localises to the cytoskeleton. It localises to the microtubule organizing center. Its subcellular location is the centrosome. Its function is as follows. Negative regulator of katanin-mediated microtubule severing and release from the centrosome. Required for central spindle formation and the completion of cytokinesis. May negatively regulate axonal outgrowth by preventing the formation of microtubule bundles that are necessary for transport within the elongating axon. Negative regulator of the Wnt signaling pathway. Represses beta-catenin-mediated transcriptional activation by promoting the nuclear exclusion of beta-catenin. In Homo sapiens (Human), this protein is Leucine zipper putative tumor suppressor 2.